The following is a 526-amino-acid chain: Cytochrome P450 monooxygenase SAT11 (526 aa).

Residues 18–38 (AFLLIAMLYLGYLLCICFYNI) traverse the membrane as a helical segment. 2 N-linked (GlcNAc...) asparagine glycosylation sites follow: Asn-125 and Asn-447. A heme-binding site is contributed by Cys-455. Asn-520 carries an N-linked (GlcNAc...) asparagine glycan.

The protein belongs to the cytochrome P450 family. Requires heme as cofactor.

Its subcellular location is the membrane. It participates in mycotoxin biosynthesis. Its function is as follows. Cytochrome P450 monooxygenase; part of the satratoxin SC2 cluster involved in the biosynthesis of satratoxins, trichothecene mycotoxins that are associated with human food poisonings. Satratoxins are suggested to be made by products of multiple gene clusters (SC1, SC2 and SC3) that encode 21 proteins in all, including polyketide synthases, acetyltransferases, and other enzymes expected to modify the trichothecene skeleton. SC1 encodes 10 proteins, SAT1 to SAT10. The largest are SAT8, which encodes a putative polyketide synthase (PKS) with a conventional non-reducing architecture, and SAT10, a putative protein containing four ankyrin repeats and thus may be involved in protein scaffolding. The putative short-chain reductase SAT3 may assist the PKS in some capacity. SAT6 contains a secretory lipase domain and acts probably as a trichothecene esterase. SAT5 encodes a putative acetyltransferase, and so, with SAT6, may affect endogenous protection from toxicity. The probable transcription factor SAT9 may regulate the expression of the SC1 cluster. SC2 encodes proteins SAT11 to SAT16, the largest of which encodes the putative reducing PKS SAT13. SAT11 is a cytochrome P450 monooxygenase, while SAT14 and SAT16 are probable acetyltransferases. The SC2 cluster may be regulated by the transcription factor SAT15. SC3 is a small cluster that encodes 5 proteins, SAT17 to SAT21. SAT21 is a putative MFS-type transporter which may have a role in exporting secondary metabolites. The four other proteins putatively encoded in SC3 include the taurine hydroxylase-like protein SAT17, the O-methyltransferase SAT18, the acetyltransferase SAT19, and the Cys6-type zinc finger SAT20, the latter being probably involved in regulation of SC3 expression. The protein is Cytochrome P450 monooxygenase SAT11 of Stachybotrys chartarum (strain CBS 109288 / IBT 7711) (Toxic black mold).